A 213-amino-acid polypeptide reads, in one-letter code: Large ribosomal subunit protein uL3 (213 aa).

The interval 131–168 (GPMSHGSKNHRLPGSTGAGTTPGRVYPGKRMAGRSGND) is disordered.

This sequence belongs to the universal ribosomal protein uL3 family. As to quaternary structure, part of the 50S ribosomal subunit. Forms a cluster with proteins L14 and L19.

Functionally, one of the primary rRNA binding proteins, it binds directly near the 3'-end of the 23S rRNA, where it nucleates assembly of the 50S subunit. The sequence is that of Large ribosomal subunit protein uL3 from Synechococcus elongatus (strain ATCC 33912 / PCC 7942 / FACHB-805) (Anacystis nidulans R2).